The sequence spans 252 residues: Imidazole glycerol phosphate synthase subunit HisF (252 aa).

Catalysis depends on residues Asp-11 and Asp-130.

It belongs to the HisA/HisF family. Heterodimer of HisH and HisF.

The protein localises to the cytoplasm. The catalysed reaction is 5-[(5-phospho-1-deoxy-D-ribulos-1-ylimino)methylamino]-1-(5-phospho-beta-D-ribosyl)imidazole-4-carboxamide + L-glutamine = D-erythro-1-(imidazol-4-yl)glycerol 3-phosphate + 5-amino-1-(5-phospho-beta-D-ribosyl)imidazole-4-carboxamide + L-glutamate + H(+). The protein operates within amino-acid biosynthesis; L-histidine biosynthesis; L-histidine from 5-phospho-alpha-D-ribose 1-diphosphate: step 5/9. IGPS catalyzes the conversion of PRFAR and glutamine to IGP, AICAR and glutamate. The HisF subunit catalyzes the cyclization activity that produces IGP and AICAR from PRFAR using the ammonia provided by the HisH subunit. The polypeptide is Imidazole glycerol phosphate synthase subunit HisF (Azobacteroides pseudotrichonymphae genomovar. CFP2).